The chain runs to 278 residues: Undecaprenyl-diphosphatase 2 (278 aa).

The next 7 membrane-spanning stretches (helical) occupy residues 1–21 (MSIIEAIIIGIVQGITEFLPI), 38–58 (FPGFGFEIFLHIASILAVILY), 85–105 (FMFAIYIIVATGITGVLGLLL), 118–138 (FIAGALIITGTFLIIIERFFV), 191–211 (SFLLSIPVILGTSVLAIGDLL), 223–243 (PLIISFIVTFFFSWLGIIWLI), and 251–271 (LIYFAFYCFALAIFVFFYFDH).

This sequence belongs to the UppP family.

Its subcellular location is the cell membrane. It carries out the reaction di-trans,octa-cis-undecaprenyl diphosphate + H2O = di-trans,octa-cis-undecaprenyl phosphate + phosphate + H(+). In terms of biological role, catalyzes the dephosphorylation of undecaprenyl diphosphate (UPP). Confers resistance to bacitracin. The chain is Undecaprenyl-diphosphatase 2 from Halalkalibacterium halodurans (strain ATCC BAA-125 / DSM 18197 / FERM 7344 / JCM 9153 / C-125) (Bacillus halodurans).